Here is a 432-residue protein sequence, read N- to C-terminus: RNA exonuclease 4 (432 aa).

Residues 42-54 (ARKKAKKKFRKSK) are compositionally biased toward basic residues. Residues 42–177 (ARKKAKKKFR…AKKRTYSDIS (136 aa)) form a disordered region. Basic and acidic residues predominate over residues 121–137 (KASDKSKGDKQRTEKAK). Phosphoserine is present on serine 123. Residue lysine 127 forms a Glycyl lysine isopeptide (Lys-Gly) (interchain with G-Cter in SUMO2) linkage. The Exonuclease domain occupies 230 to 381 (KRLGQKKRTI…PSLKRLSEKI (152 aa)).

This sequence belongs to the REXO4 family. As to quaternary structure, can bind ESR1 and ESR2. This interaction is abrogated by estrogen and augmented by tamoxifen treatment.

Its subcellular location is the nucleus. It localises to the nucleolus. Functionally, may function as an exonuclease. This chain is RNA exonuclease 4 (Rexo4), found in Mus musculus (Mouse).